Consider the following 299-residue polypeptide: MRIIVLGSAAGGGHPQWNCHTPASQRAWQQADGAQRRTQASIAVSADGQRWVLINASPDFRQQILATPALWPQHGLRHSPIESVLLTSGEIDHIAGLLSMRESQRFSLHASSRVLDLLAQNPIFDALNPQYVDRHPFALNTPLTLCDLQLTPFSVPGKVPLFMESRSGGDLAGSNEETLGLTIDDGRHRVHYIPGCAAMTDDLRARLHGAELVFFDGTLWRDDEMVQLGVSQKTGQRMGHMSIDGTDGTLAAFAQLQVARKVLIHINTTNPVLDAHSPEHAAVRAAGWDVAHDGLEISL.

This sequence belongs to the PqqB family.

It participates in cofactor biosynthesis; pyrroloquinoline quinone biosynthesis. In terms of biological role, may be involved in the transport of PQQ or its precursor to the periplasm. This chain is Coenzyme PQQ synthesis protein B, found in Xanthomonas campestris pv. campestris (strain 8004).